A 354-amino-acid polypeptide reads, in one-letter code: Methylthioribose-1-phosphate isomerase (354 aa).

Residues 58–60 (RGA), arginine 101, and glutamine 204 each bind substrate. Residue aspartate 245 is the Proton donor of the active site. 255–256 (NK) serves as a coordination point for substrate.

The protein belongs to the eIF-2B alpha/beta/delta subunits family. MtnA subfamily.

The enzyme catalyses 5-(methylsulfanyl)-alpha-D-ribose 1-phosphate = 5-(methylsulfanyl)-D-ribulose 1-phosphate. It participates in amino-acid biosynthesis; L-methionine biosynthesis via salvage pathway; L-methionine from S-methyl-5-thio-alpha-D-ribose 1-phosphate: step 1/6. In terms of biological role, catalyzes the interconversion of methylthioribose-1-phosphate (MTR-1-P) into methylthioribulose-1-phosphate (MTRu-1-P). This is Methylthioribose-1-phosphate isomerase from Xanthomonas euvesicatoria pv. vesicatoria (strain 85-10) (Xanthomonas campestris pv. vesicatoria).